The primary structure comprises 130 residues: S-adenosylmethionine decarboxylase proenzyme (130 aa).

The active-site Schiff-base intermediate with substrate; via pyruvic acid is S66. Position 66 is a pyruvic acid (Ser); by autocatalysis (S66). H71 functions as the Proton acceptor; for processing activity in the catalytic mechanism. Residue C86 is the Proton donor; for catalytic activity of the active site.

Belongs to the prokaryotic AdoMetDC family. Type 1 subfamily. As to quaternary structure, heterotetramer of two alpha and two beta chains arranged as a dimer of alpha/beta heterodimers. Requires pyruvate as cofactor. Is synthesized initially as an inactive proenzyme. Formation of the active enzyme involves a self-maturation process in which the active site pyruvoyl group is generated from an internal serine residue via an autocatalytic post-translational modification. Two non-identical subunits are generated from the proenzyme in this reaction, and the pyruvate is formed at the N-terminus of the alpha chain, which is derived from the carboxyl end of the proenzyme. The post-translation cleavage follows an unusual pathway, termed non-hydrolytic serinolysis, in which the side chain hydroxyl group of the serine supplies its oxygen atom to form the C-terminus of the beta chain, while the remainder of the serine residue undergoes an oxidative deamination to produce ammonia and the pyruvoyl group blocking the N-terminus of the alpha chain.

The enzyme catalyses S-adenosyl-L-methionine + H(+) = S-adenosyl 3-(methylsulfanyl)propylamine + CO2. The protein operates within amine and polyamine biosynthesis; S-adenosylmethioninamine biosynthesis; S-adenosylmethioninamine from S-adenosyl-L-methionine: step 1/1. Catalyzes the decarboxylation of S-adenosylmethionine to S-adenosylmethioninamine (dcAdoMet), the propylamine donor required for the synthesis of the polyamines spermine and spermidine from the diamine putrescine. The sequence is that of S-adenosylmethionine decarboxylase proenzyme from Bacillus cytotoxicus (strain DSM 22905 / CIP 110041 / 391-98 / NVH 391-98).